Reading from the N-terminus, the 37-residue chain is Large ribosomal subunit protein bL36c (37 aa).

The protein belongs to the bacterial ribosomal protein bL36 family.

It is found in the plastid. The protein localises to the chloroplast. The chain is Large ribosomal subunit protein bL36c (rpl36) from Anthoceros angustus (Hornwort).